Consider the following 403-residue polypeptide: MDKLSIRDLSLEGKKVLVRVDFNVPIKDGKILDDVRIRSAMPTIHYLLKQDAAVILVSHLGRPKGGVFEEAYSLAPIVPVLEGYLGHHVPLSPDCIGEVARQAVAQLSPGRVLLLENVRFHKGEEHPDEDPSFAIELAAYADFYVNDAFGTSHRKHASVYRVPQLFPDRAAAGFLMEKELEFLGQHLLVEPKRPFTAILGGAKMSSKIGVIEALLSCVDHLVLAGGMGYTFLRAMNRQVGNSLVEESGIPLAKKVLEKAQALGVKIHLPVDAKVAKQCDSGEDWRELSIQEGIPEGLAGFDIGAQTIELFSKVIQESATIFWNGPVGVYEVPPFDQGSKAIAQCLASHSSAVTVVGGGDAAAVVALAGCTSQISHVSTGGGASLEFLEKGSLPGTEILSPAQS.

Substrate contacts are provided by residues 21-23 (DFN), arginine 36, 59-62 (HLGR), arginine 119, and arginine 154. Residues lysine 207, glycine 299, glutamate 330, and 357 to 360 (GGDA) contribute to the ATP site.

Belongs to the phosphoglycerate kinase family. In terms of assembly, monomer.

It is found in the cytoplasm. It catalyses the reaction (2R)-3-phosphoglycerate + ATP = (2R)-3-phospho-glyceroyl phosphate + ADP. It participates in carbohydrate degradation; glycolysis; pyruvate from D-glyceraldehyde 3-phosphate: step 2/5. This is Phosphoglycerate kinase from Chlamydia trachomatis serovar L2 (strain ATCC VR-902B / DSM 19102 / 434/Bu).